The sequence spans 902 residues: Mitochondrial aspartate-glutamate transporter AGC1 (902 aa).

Solcar repeat units lie at residues 528-614, 622-710, and 725-813; these read FDSL…MRNR, LSLF…LKKD, and LKTW…FKGF. 6 helical membrane-spanning segments follow: residues 534–554, 591–611, 622–642, 681–702, 731–751, and 786–806; these read FSLGSIAGCIGATVVYPIDFI, GPQLIGVAPEKAIKLTVNDFM, LSLFPEIISGASAGACQVIFT, GLYNGVAACLMRDVPFSAIYFP, LTAGAIAGMPAAFLTTPFDVI, and FKGGGARVLRSSPQFGFTLAA.

This sequence belongs to the mitochondrial carrier (TC 2.A.29) family.

The protein localises to the mitochondrion inner membrane. Its function is as follows. Calcium-dependent mitochondrial aspartate and glutamate carrier. Transport of glutamate in mitochondria is required for mitochondrial transamination reactions and ornithine synthesis. Plays also a role in malate-aspartate NADH shuttle, which is critical for growth on acetate and fatty acids. This Saccharomyces cerevisiae (strain ATCC 204508 / S288c) (Baker's yeast) protein is Mitochondrial aspartate-glutamate transporter AGC1 (AGC1).